Here is a 208-residue protein sequence, read N- to C-terminus: uncharacterized protein (208 aa).

This is an uncharacterized protein from Saccharum officinarum (Sugarcane).